Reading from the N-terminus, the 1216-residue chain is Apical endosomal glycoprotein (1216 aa).

Residues 1–21 (MCLPSCLLSIWVLFMAAQSLG) form the signal peptide. Residues 22-1155 (KTWVPDHCRS…SQGRVAAPVS (1134 aa)) are Extracellular-facing. The 28-residue stretch at 27 to 54 (DHCRSPTEATCNFVCDCGDCSDEAQCGF) folds into the LDL-receptor class A 1; truncated domain. The 163-residue stretch at 62 to 224 (NTPFTCNFEQ…DDMEFWDCGL (163 aa)) folds into the MAM 1 domain. The N-linked (GlcNAc...) asparagine glycan is linked to Asn-205. The 41-residue stretch at 229-269 (ARCPLGHHHCQNKACVEPHQLCDGEDNCGDSSDEDPLICSH) folds into the LDL-receptor class A 2 domain. 3 disulfides stabilise this stretch: Cys-231–Cys-243, Cys-238–Cys-256, and Cys-250–Cys-267. One can recognise an MAM 2 domain in the interval 268 to 427 (SHHMATDFET…DLIMSNHCIL (160 aa)). N-linked (GlcNAc...) asparagine glycans are attached at residues Asn-291, Asn-341, and Asn-368. The region spanning 454–491 (RTCDAGHLSCDELCVPPEQLCDFQQHCAEGEDEEKCGT) is the LDL-receptor class A 3 domain. Disulfide bonds link Cys-456/Cys-467, Cys-463/Cys-480, and Cys-474/Cys-489. 4 consecutive MAM domains span residues 492–647 (TDFE…DCNP), 654–813 (DQEV…PCWA), 812–973 (WAAK…PCAQ), and 972–1142 (AQPG…HCKQ). Asn-639 carries N-linked (GlcNAc...) asparagine glycosylation. N-linked (GlcNAc...) asparagine glycosylation is present at Asn-839. A helical transmembrane segment spans residues 1156–1176 (VPVAVGGALLLFLLLLGLGGW). The Cytoplasmic segment spans residues 1177–1216 (HWLQKQHLPCQSTDAAASGFDNILFNADQVTLPESITSNP).

As to expression, apical endosomal tubules of developing rat intestinal epithelial cells.

The protein resides in the membrane. Its function is as follows. Probably involved in the sorting and selective transport of receptors and ligands across polarized epithelia. This Rattus norvegicus (Rat) protein is Apical endosomal glycoprotein (Mamdc4).